Consider the following 291-residue polypeptide: UPF0276 protein VV3194 (291 aa).

It belongs to the UPF0276 family.

The chain is UPF0276 protein VV3194 from Vibrio vulnificus (strain YJ016).